The sequence spans 357 residues: UDP-N-acetylglucosamine--N-acetylmuramyl-(pentapeptide) pyrophosphoryl-undecaprenol N-acetylglucosamine transferase (357 aa).

UDP-N-acetyl-alpha-D-glucosamine-binding positions include 10–12, N124, S189, I244, and Q289; that span reads TGG.

The protein belongs to the glycosyltransferase 28 family. MurG subfamily.

The protein localises to the cell membrane. It carries out the reaction Mur2Ac(oyl-L-Ala-gamma-D-Glu-L-Lys-D-Ala-D-Ala)-di-trans,octa-cis-undecaprenyl diphosphate + UDP-N-acetyl-alpha-D-glucosamine = beta-D-GlcNAc-(1-&gt;4)-Mur2Ac(oyl-L-Ala-gamma-D-Glu-L-Lys-D-Ala-D-Ala)-di-trans,octa-cis-undecaprenyl diphosphate + UDP + H(+). Its pathway is cell wall biogenesis; peptidoglycan biosynthesis. Functionally, cell wall formation. Catalyzes the transfer of a GlcNAc subunit on undecaprenyl-pyrophosphoryl-MurNAc-pentapeptide (lipid intermediate I) to form undecaprenyl-pyrophosphoryl-MurNAc-(pentapeptide)GlcNAc (lipid intermediate II). The chain is UDP-N-acetylglucosamine--N-acetylmuramyl-(pentapeptide) pyrophosphoryl-undecaprenol N-acetylglucosamine transferase from Lactococcus lactis subsp. cremoris (strain MG1363).